The sequence spans 271 residues: Phosphate import ATP-binding protein PstB 2 (271 aa).

The tract at residues 1–20 is disordered; sequence MLTKKPEINTILQTTPDPHS. One can recognise an ABC transporter domain in the interval 25–266; the sequence is MATEDLHVYY…PQEKQTEDYI (242 aa). 57-64 lines the ATP pocket; it reads GPSGCGKS.

It belongs to the ABC transporter superfamily. Phosphate importer (TC 3.A.1.7) family. As to quaternary structure, the complex is composed of two ATP-binding proteins (PstB), two transmembrane proteins (PstC and PstA) and a solute-binding protein (PstS).

It localises to the cell membrane. It carries out the reaction phosphate(out) + ATP + H2O = ADP + 2 phosphate(in) + H(+). Part of the ABC transporter complex PstSACB involved in phosphate import. Responsible for energy coupling to the transport system. This Listeria innocua serovar 6a (strain ATCC BAA-680 / CLIP 11262) protein is Phosphate import ATP-binding protein PstB 2.